The following is a 267-amino-acid chain: MVALSNALSRVFGSVAGYKFPSFIQKSINALYVKIFKIDLSEFEPLENYKSLNALFMRSLKKERPFDKAPNICIAPCDALITECAFLDNDSALQIKGMPYKAHELVGEINPLSPSFFYVNFYLSPKDYHHYHAPCDLEILEARYFAGKLLPVNKPSLHKNKNLFVGNERVALVAKDIQGNKLYFVAVGALNVGKMRFNFDKNIQTNAKARFMQTYSYNPPIKVKKGDNLGNFEMGSTIVLFIQNTAFKDLKEKSVKFGESIGEFHAN.

Residues aspartate 78, histidine 132, and serine 236 each act as charge relay system; for autoendoproteolytic cleavage activity in the active site. Catalysis depends on serine 236, which acts as the Schiff-base intermediate with substrate; via pyruvic acid; for decarboxylase activity. Serine 236 carries the pyruvic acid (Ser); by autocatalysis modification.

This sequence belongs to the phosphatidylserine decarboxylase family. PSD-B subfamily. Prokaryotic type I sub-subfamily. As to quaternary structure, heterodimer of a large membrane-associated beta subunit and a small pyruvoyl-containing alpha subunit. The cofactor is pyruvate. Is synthesized initially as an inactive proenzyme. Formation of the active enzyme involves a self-maturation process in which the active site pyruvoyl group is generated from an internal serine residue via an autocatalytic post-translational modification. Two non-identical subunits are generated from the proenzyme in this reaction, and the pyruvate is formed at the N-terminus of the alpha chain, which is derived from the carboxyl end of the proenzyme. The autoendoproteolytic cleavage occurs by a canonical serine protease mechanism, in which the side chain hydroxyl group of the serine supplies its oxygen atom to form the C-terminus of the beta chain, while the remainder of the serine residue undergoes an oxidative deamination to produce ammonia and the pyruvoyl prosthetic group on the alpha chain. During this reaction, the Ser that is part of the protease active site of the proenzyme becomes the pyruvoyl prosthetic group, which constitutes an essential element of the active site of the mature decarboxylase.

It localises to the cell membrane. It catalyses the reaction a 1,2-diacyl-sn-glycero-3-phospho-L-serine + H(+) = a 1,2-diacyl-sn-glycero-3-phosphoethanolamine + CO2. It functions in the pathway phospholipid metabolism; phosphatidylethanolamine biosynthesis; phosphatidylethanolamine from CDP-diacylglycerol: step 2/2. Its function is as follows. Catalyzes the formation of phosphatidylethanolamine (PtdEtn) from phosphatidylserine (PtdSer). The chain is Phosphatidylserine decarboxylase proenzyme from Helicobacter pylori (strain J99 / ATCC 700824) (Campylobacter pylori J99).